Here is a 312-residue protein sequence, read N- to C-terminus: Serine/threonine-protein phosphatase CPPED1 (312 aa).

At Ser-2 the chain carries Phosphoserine. The segment at 47–250 (KAWSTGNCDA…AVFSGHYHRN (204 aa)) is catalytic. Residues Asp-90, Asn-127, and His-246 each coordinate a divalent metal cation. Ser-293 carries the post-translational modification Phosphoserine.

It belongs to the metallophosphoesterase superfamily. CPPED1 family. The cofactor is a divalent metal cation.

The protein resides in the cytoplasm. It carries out the reaction O-phospho-L-seryl-[protein] + H2O = L-seryl-[protein] + phosphate. The enzyme catalyses O-phospho-L-threonyl-[protein] + H2O = L-threonyl-[protein] + phosphate. Protein phosphatase that dephosphorylates AKT family kinase specifically at 'Ser-473', blocking cell cycle progression and promoting cell apoptosis. May play an inhibitory role in glucose uptake by adipocytes. The protein is Serine/threonine-protein phosphatase CPPED1 (Cpped1) of Mus musculus (Mouse).